Here is a 468-residue protein sequence, read N- to C-terminus: Phosphoglucosamine mutase (468 aa).

The Phosphoserine intermediate role is filled by Ser-112. Mg(2+) is bound by residues Ser-112, Asp-254, Asp-256, and Asp-258. Residue Ser-112 is modified to Phosphoserine.

Belongs to the phosphohexose mutase family. Mg(2+) serves as cofactor. In terms of processing, activated by phosphorylation.

The enzyme catalyses alpha-D-glucosamine 1-phosphate = D-glucosamine 6-phosphate. Functionally, catalyzes the conversion of glucosamine-6-phosphate to glucosamine-1-phosphate. This is Phosphoglucosamine mutase from Prochlorococcus marinus (strain MIT 9313).